The sequence spans 369 residues: Probable L-tyrosine/L-aspartate decarboxylase (369 aa).

K224 is modified (N6-(pyridoxal phosphate)lysine).

This sequence belongs to the group II decarboxylase family. MfnA subfamily. The cofactor is pyridoxal 5'-phosphate.

It carries out the reaction L-tyrosine + H(+) = tyramine + CO2. The catalysed reaction is L-aspartate + H(+) = beta-alanine + CO2. It functions in the pathway cofactor biosynthesis; methanofuran biosynthesis. Its pathway is cofactor biosynthesis; coenzyme A biosynthesis. Catalyzes the decarboxylation of L-tyrosine to produce tyramine for methanofuran biosynthesis. Can also catalyze the decarboxylation of L-aspartate to produce beta-alanine for coenzyme A (CoA) biosynthesis. This chain is Probable L-tyrosine/L-aspartate decarboxylase, found in Methanospirillum hungatei JF-1 (strain ATCC 27890 / DSM 864 / NBRC 100397 / JF-1).